The chain runs to 286 residues: Light-independent protochlorophyllide reductase iron-sulfur ATP-binding protein (286 aa).

Residues 10 to 15 (GIGKST) and lysine 39 each bind ATP. Serine 14 lines the Mg(2+) pocket. The [4Fe-4S] cluster site is built by cysteine 95 and cysteine 129. 180–181 (NR) contributes to the ATP binding site.

The protein belongs to the NifH/BchL/ChlL family. Homodimer. Protochlorophyllide reductase is composed of three subunits; ChlL, ChlN and ChlB. The cofactor is [4Fe-4S] cluster.

The enzyme catalyses chlorophyllide a + oxidized 2[4Fe-4S]-[ferredoxin] + 2 ADP + 2 phosphate = protochlorophyllide a + reduced 2[4Fe-4S]-[ferredoxin] + 2 ATP + 2 H2O. The protein operates within porphyrin-containing compound metabolism; chlorophyll biosynthesis (light-independent). Functionally, component of the dark-operative protochlorophyllide reductase (DPOR) that uses Mg-ATP and reduced ferredoxin to reduce ring D of protochlorophyllide (Pchlide) to form chlorophyllide a (Chlide). This reaction is light-independent. The L component serves as a unique electron donor to the NB-component of the complex, and binds Mg-ATP. In Leptolyngbya boryana (Plectonema boryanum), this protein is Light-independent protochlorophyllide reductase iron-sulfur ATP-binding protein.